The chain runs to 339 residues: DNA-directed RNA polymerase subunit alpha (339 aa).

Residues 1 to 233 (MVREEVAGST…DLFLPFLHAE (233 aa)) form an alpha N-terminal domain (alpha-NTD) region. The segment at 264-339 (KKGIPLNCIF…IDLLKNKLSF (76 aa)) is alpha C-terminal domain (alpha-CTD).

It belongs to the RNA polymerase alpha chain family. In plastids the minimal PEP RNA polymerase catalytic core is composed of four subunits: alpha, beta, beta', and beta''. When a (nuclear-encoded) sigma factor is associated with the core the holoenzyme is formed, which can initiate transcription.

The protein resides in the plastid. The protein localises to the chloroplast. The catalysed reaction is RNA(n) + a ribonucleoside 5'-triphosphate = RNA(n+1) + diphosphate. In terms of biological role, DNA-dependent RNA polymerase catalyzes the transcription of DNA into RNA using the four ribonucleoside triphosphates as substrates. The protein is DNA-directed RNA polymerase subunit alpha of Psathyrostachys stoloniformis.